The chain runs to 185 residues: Ribosome-recycling factor (185 aa).

Belongs to the RRF family.

It is found in the cytoplasm. In terms of biological role, responsible for the release of ribosomes from messenger RNA at the termination of protein biosynthesis. May increase the efficiency of translation by recycling ribosomes from one round of translation to another. The sequence is that of Ribosome-recycling factor from Chromobacterium violaceum (strain ATCC 12472 / DSM 30191 / JCM 1249 / CCUG 213 / NBRC 12614 / NCIMB 9131 / NCTC 9757 / MK).